The sequence spans 344 residues: Dihydroorotase (344 aa).

Residues His-13 and His-15 each coordinate Zn(2+). Substrate contacts are provided by residues 15-17 (HFR) and Asn-41. The Zn(2+) site is built by Lys-98, His-135, and His-173. An N6-carboxylysine modification is found at Lys-98. Residue His-135 participates in substrate binding. Residue Leu-218 participates in substrate binding. Asp-246 provides a ligand contact to Zn(2+). Asp-246 is an active-site residue. The substrate site is built by His-250 and Ala-262.

The protein belongs to the metallo-dependent hydrolases superfamily. DHOase family. Class II DHOase subfamily. Homodimer. The cofactor is Zn(2+).

It catalyses the reaction (S)-dihydroorotate + H2O = N-carbamoyl-L-aspartate + H(+). It participates in pyrimidine metabolism; UMP biosynthesis via de novo pathway; (S)-dihydroorotate from bicarbonate: step 3/3. In terms of biological role, catalyzes the reversible cyclization of carbamoyl aspartate to dihydroorotate. The sequence is that of Dihydroorotase from Shewanella sediminis (strain HAW-EB3).